A 471-amino-acid polypeptide reads, in one-letter code: Ribosomal protein uS12 methylthiotransferase RimO (471 aa).

Residues 23–138 (PKIGFVSLGC…VMDAVHVHVP (116 aa)) enclose the MTTase N-terminal domain. Residues cysteine 32, cysteine 68, cysteine 97, cysteine 169, cysteine 173, and cysteine 176 each contribute to the [4Fe-4S] cluster site. The Radical SAM core domain maps to 155–396 (LTPRHYAYLK…MAVAEAVSAE (242 aa)). The TRAM domain maps to 399 to 471 (RERVGAEMQV…QGHDLVGQPL (73 aa)).

The protein belongs to the methylthiotransferase family. RimO subfamily. [4Fe-4S] cluster is required as a cofactor.

The protein resides in the cytoplasm. The enzyme catalyses L-aspartate(89)-[ribosomal protein uS12]-hydrogen + (sulfur carrier)-SH + AH2 + 2 S-adenosyl-L-methionine = 3-methylsulfanyl-L-aspartate(89)-[ribosomal protein uS12]-hydrogen + (sulfur carrier)-H + 5'-deoxyadenosine + L-methionine + A + S-adenosyl-L-homocysteine + 2 H(+). Its function is as follows. Catalyzes the methylthiolation of an aspartic acid residue of ribosomal protein uS12. The polypeptide is Ribosomal protein uS12 methylthiotransferase RimO (Methylibium petroleiphilum (strain ATCC BAA-1232 / LMG 22953 / PM1)).